The primary structure comprises 370 residues: MQFESPIKRRKSRQIMVGDVAVGGDAPITIQSMTNTETTDVEATVAQIERIQMAGADIVRVSVPSMDAAEAFGAIRKRVSIPLVADIHFDYRIALRVADLGVDCLRINPGNIGREKRILAVVDKARDLNIPIRIGVNAGSLEKDLQTKYGEPTPDALVESALRHVEILDKYDFQNFKVSVKASDVFMAVAAYRKLATQIEQPLHLGITEAGGLRGGTVKSSVGLGMLLMDGIGDTIRVSLAADPVEEVKVGWDILKSLKLRSKGINFIACPSCSRQNFDVIKTMNELEMRLEDITTPLDVAVIGCVVNGPGEAKEVDVGLAGGTPKNLVYVNGVPSQKFEQENLVDSLEQLIRKQAAEKEAKEKDIIAKV.

Positions 270, 273, 305, and 312 each coordinate [4Fe-4S] cluster.

This sequence belongs to the IspG family. The cofactor is [4Fe-4S] cluster.

The enzyme catalyses (2E)-4-hydroxy-3-methylbut-2-enyl diphosphate + oxidized [flavodoxin] + H2O + 2 H(+) = 2-C-methyl-D-erythritol 2,4-cyclic diphosphate + reduced [flavodoxin]. It functions in the pathway isoprenoid biosynthesis; isopentenyl diphosphate biosynthesis via DXP pathway; isopentenyl diphosphate from 1-deoxy-D-xylulose 5-phosphate: step 5/6. Functionally, converts 2C-methyl-D-erythritol 2,4-cyclodiphosphate (ME-2,4cPP) into 1-hydroxy-2-methyl-2-(E)-butenyl 4-diphosphate. The sequence is that of 4-hydroxy-3-methylbut-2-en-1-yl diphosphate synthase (flavodoxin) from Saccharophagus degradans (strain 2-40 / ATCC 43961 / DSM 17024).